We begin with the raw amino-acid sequence, 129 residues long: uncharacterized protein (129 aa).

This is an uncharacterized protein from Archaeoglobus fulgidus (strain ATCC 49558 / DSM 4304 / JCM 9628 / NBRC 100126 / VC-16).